The following is a 233-amino-acid chain: Ribose-5-phosphate isomerase A (233 aa).

Substrate contacts are provided by residues 28–31, 83–86, and 96–99; these read SGST, DGAD, and KGGG. Glu105 serves as the catalytic Proton acceptor. Lys123 is a substrate binding site.

The protein belongs to the ribose 5-phosphate isomerase family. In terms of assembly, homodimer.

It carries out the reaction aldehydo-D-ribose 5-phosphate = D-ribulose 5-phosphate. Its pathway is carbohydrate degradation; pentose phosphate pathway; D-ribose 5-phosphate from D-ribulose 5-phosphate (non-oxidative stage): step 1/1. In terms of biological role, catalyzes the reversible conversion of ribose-5-phosphate to ribulose 5-phosphate. This Maricaulis maris (strain MCS10) (Caulobacter maris) protein is Ribose-5-phosphate isomerase A.